Consider the following 347-residue polypeptide: NADH-ubiquinone oxidoreductase chain 2 (347 aa).

11 helical membrane-spanning segments follow: residues 3-23 (PMTSTILLMTIMSGTSIVLMS), 25-45 (HWFMTWLGFEMNMMAIIPILM), 59-79 (YFLTQATASMILVLAIIINLM), 96-116 (TLITIALVMKLGLAPFHFWVP), 122-142 (VSLSSGLILLTWQKIAPLSLL), 149-169 (INTNLLLTMSLLSIMIGGWGG), 178-198 (IMAYSSIAHMGWMIVIMIYNP), 200-220 (LSLLNLFIYIMMTSSMFMLLI), 240-260 (ITTMMMATLLSLGGLPPLTGF), 274-294 (NSVILPTLMAILALLNLFFYM), and 326-346 (MTMLISISTLALPLTPLFISL).

This sequence belongs to the complex I subunit 2 family. In terms of assembly, core subunit of respiratory chain NADH dehydrogenase (Complex I) which is composed of 45 different subunits. Interacts with TMEM242.

The protein resides in the mitochondrion inner membrane. It catalyses the reaction a ubiquinone + NADH + 5 H(+)(in) = a ubiquinol + NAD(+) + 4 H(+)(out). Core subunit of the mitochondrial membrane respiratory chain NADH dehydrogenase (Complex I) which catalyzes electron transfer from NADH through the respiratory chain, using ubiquinone as an electron acceptor. Essential for the catalytic activity and assembly of complex I. In Sylvisorex granti (Grant's forest shrew), this protein is NADH-ubiquinone oxidoreductase chain 2.